A 344-amino-acid chain; its full sequence is Dihydroorotate dehydrogenase (quinone) (344 aa).

FMN is bound by residues 65–69 (AGLDK) and Thr-89. Lys-69 provides a ligand contact to substrate. 114–118 (NRLGF) serves as a coordination point for substrate. Residues Asn-145 and Asn-178 each coordinate FMN. Asn-178 contacts substrate. Residue Ser-181 is the Nucleophile of the active site. Residue Asn-183 participates in substrate binding. FMN contacts are provided by Lys-223 and Thr-251. A substrate-binding site is contributed by 252–253 (NT). Residues Gly-274, Gly-303, and 324-325 (YT) each bind FMN.

It belongs to the dihydroorotate dehydrogenase family. Type 2 subfamily. As to quaternary structure, monomer. FMN is required as a cofactor.

It localises to the cell membrane. The catalysed reaction is (S)-dihydroorotate + a quinone = orotate + a quinol. It functions in the pathway pyrimidine metabolism; UMP biosynthesis via de novo pathway; orotate from (S)-dihydroorotate (quinone route): step 1/1. Catalyzes the conversion of dihydroorotate to orotate with quinone as electron acceptor. This Methylibium petroleiphilum (strain ATCC BAA-1232 / LMG 22953 / PM1) protein is Dihydroorotate dehydrogenase (quinone).